A 444-amino-acid chain; its full sequence is Phosphoglucosamine mutase (444 aa).

The active-site Phosphoserine intermediate is the S102. 4 residues coordinate Mg(2+): S102, D241, D243, and D245. S102 bears the Phosphoserine mark.

Belongs to the phosphohexose mutase family. The cofactor is Mg(2+). Activated by phosphorylation.

It carries out the reaction alpha-D-glucosamine 1-phosphate = D-glucosamine 6-phosphate. Catalyzes the conversion of glucosamine-6-phosphate to glucosamine-1-phosphate. The polypeptide is Phosphoglucosamine mutase (Acidovorax sp. (strain JS42)).